The chain runs to 336 residues: Phosphate acyltransferase (336 aa).

It belongs to the PlsX family. In terms of assembly, homodimer. Probably interacts with PlsY.

It localises to the cytoplasm. The catalysed reaction is a fatty acyl-[ACP] + phosphate = an acyl phosphate + holo-[ACP]. It participates in lipid metabolism; phospholipid metabolism. Catalyzes the reversible formation of acyl-phosphate (acyl-PO(4)) from acyl-[acyl-carrier-protein] (acyl-ACP). This enzyme utilizes acyl-ACP as fatty acyl donor, but not acyl-CoA. The chain is Phosphate acyltransferase from Pseudomonas fluorescens (strain Pf0-1).